Here is a 205-residue protein sequence, read N- to C-terminus: Sarcosine oxidase subunit gamma (205 aa).

The protein belongs to the SoxG family. Heterotetramer composed of subunits alpha (SoxA), beta (SoxB), gamma (SoxG) and delta (SoxD).

It localises to the cytoplasm. The catalysed reaction is sarcosine + (6S)-5,6,7,8-tetrahydrofolate + O2 = (6R)-5,10-methylene-5,6,7,8-tetrahydrofolate + glycine + H2O2. It catalyses the reaction sarcosine + O2 + H2O = formaldehyde + glycine + H2O2. With respect to regulation, inhibited by Zn(2+), Cu(2+), Cd(2+), Hg(2+), Ag(+), p-chloromercuribenzoate (p-CMB), iodoacetamide, N-ethylmaleimide, CN(-), o-phenanthroline and sodium lauryl sulfate. In the presence of tetrahydrofolate, catalyzes the oxidative demethylation of sarcosine to yield glycine, 5,10-methylenetetrahydrofolate and hydrogen peroxide. In the absence of tetrahydrofolate, catalyzes the oxidative demethylation of sarcosine to yield glycine, formaldehyde and hydrogen peroxide. Can also use N-methyl-L-alanine and N-ethyl-L-glycine. Is very specific for oxygen as an acceptor. In Corynebacterium sp. (strain U-96), this protein is Sarcosine oxidase subunit gamma.